Consider the following 725-residue polypeptide: ABC transporter G family member 19 (725 aa).

Residues 73-325 (LNFNNLQYDV…FSDFGRPIPE (253 aa)) enclose the ABC transporter domain. 117-124 (GASGAGKS) contacts ATP. One can recognise an ABC transmembrane type-2 domain in the interval 419 to 629 (FETFILAKRY…PYEAVLINEF (211 aa)). Transmembrane regions (helical) follow at residues 438–458 (LVGT…TVYW), 473–493 (LFAF…PVFI), 515–535 (ISHS…FSAI), 537–557 (FWTV…LLIY), 577–597 (IMLC…LSGF), 606–626 (FYWT…AVLI), and 698–718 (LWIT…ALLF).

Belongs to the ABC transporter superfamily. ABCG family. Eye pigment precursor importer (TC 3.A.1.204) subfamily.

It localises to the vacuole membrane. Confers selective resistance to kanamycin. In Arabidopsis thaliana (Mouse-ear cress), this protein is ABC transporter G family member 19 (ABCG19).